Reading from the N-terminus, the 269-residue chain is Cytochrome c oxidase subunit 3 (269 aa).

At M1–W22 the chain is on the mitochondrial matrix side. A helical transmembrane segment spans residues P23–M41. Residues H42 to M48 lie on the Mitochondrial intermembrane side of the membrane. Residues N49 to A73 form a helical membrane-spanning segment. Topologically, residues T74–T80 are mitochondrial matrix. Residues M81–M114 traverse the membrane as a helical segment. Over S115–L137 the chain is Mitochondrial intermembrane. The helical transmembrane segment at P138–A161 threads the bilayer. Residues G162 to R164 are Mitochondrial matrix-facing. The chain crosses the membrane as a helical span at residues N165 to E188. At Y189–Y201 the chain is on the mitochondrial intermembrane side. The chain crosses the membrane as a helical span at residues G202–M230. At R231–I248 the chain is on the mitochondrial matrix side. The chain crosses the membrane as a helical span at residues Y249–Y265. Over W266–V269 the chain is Mitochondrial intermembrane.

The protein belongs to the cytochrome c oxidase subunit 3 family. In terms of assembly, component of the cytochrome c oxidase (complex IV, CIV), a multisubunit enzyme composed of 12 subunits. The complex is composed of a catalytic core of 3 subunits COX1, COX2 and COX3, encoded in the mitochondrial DNA, and 9 supernumerary subunits COX4, COX5A (or COX5B), COX6, COX7, COX8, COX9, COX12, COX13 and COX26, which are encoded in the nuclear genome. The complex exists as a monomer or a dimer and forms supercomplexes (SCs) in the inner mitochondrial membrane with a dimer of ubiquinol-cytochrome c oxidoreductase (cytochrome b-c1 complex, complex III, CIII), resulting in 2 different assemblies (supercomplexes III(2)IV and III(2)IV(2)). The N-terminus is blocked.

Its subcellular location is the mitochondrion inner membrane. The enzyme catalyses 4 Fe(II)-[cytochrome c] + O2 + 8 H(+)(in) = 4 Fe(III)-[cytochrome c] + 2 H2O + 4 H(+)(out). Its function is as follows. Component of the cytochrome c oxidase, the last enzyme in the mitochondrial electron transport chain which drives oxidative phosphorylation. The respiratory chain contains 3 multisubunit complexes succinate dehydrogenase (complex II, CII), ubiquinol-cytochrome c oxidoreductase (cytochrome b-c1 complex, complex III, CIII) and cytochrome c oxidase (complex IV, CIV), that cooperate to transfer electrons derived from NADH and succinate to molecular oxygen, creating an electrochemical gradient over the inner membrane that drives transmembrane transport and the ATP synthase. Cytochrome c oxidase is the component of the respiratory chain that catalyzes the reduction of oxygen to water. Electrons originating from reduced cytochrome c in the intermembrane space (IMS) are transferred via the dinuclear copper A center (CU(A)) of COX2 and heme A of COX1 to the active site in COX1, a binuclear center (BNC) formed by heme A3 and copper B (CU(B)). The BNC reduces molecular oxygen to 2 water molecules using 4 electrons from cytochrome c in the IMS and 4 protons from the mitochondrial matrix. COX3 is a catalytic core subunit. The polypeptide is Cytochrome c oxidase subunit 3 (COX3) (Saccharomyces cerevisiae (strain ATCC 204508 / S288c) (Baker's yeast)).